Here is a 3672-residue protein sequence, read N- to C-terminus: Laminin-like protein epi-1 (3672 aa).

An N-terminal signal peptide occupies residues 1–27; the sequence is MSPYDSSPWATKALFLIVTLLAQFTYS. Residues 28-297 enclose the Laminin N-terminal domain; the sequence is QVLTPSQITI…AIKEIMIGGR (270 aa). 3 N-linked (GlcNAc...) asparagine glycosylation sites follow: Asn121, Asn140, and Asn249. 43 disulfides stabilise this stretch: Cys298/Cys307, Cys300/Cys320, Cys322/Cys331, Cys334/Cys354, Cys357/Cys366, Cys359/Cys391, Cys394/Cys403, Cys406/Cys424, Cys427/Cys438, Cys429/Cys445, Cys447/Cys456, Cys459/Cys469, Cys472/Cys484, Cys474/Cys491, Cys493/Cys502, Cys505/Cys516, Cys519/Cys531, Cys521/Cys538, Cys540/Cys549, Cys552/Cys561, Cys564/Cys576, Cys566/Cys583, Cys585/Cys594, Cys597/Cys607, Cys610/Cys622, Cys612/Cys629, Cys631/Cys640, Cys643/Cys653, Cys656/Cys668, Cys658/Cys674, Cys676/Cys685, Cys688/Cys698, Cys701/Cys715, Cys703/Cys724, Cys726/Cys735, Cys738/Cys753, Cys756/Cys770, Cys758/Cys777, Cys779/Cys788, Cys791/Cys806, Cys809/Cys821, Cys811/Cys828, and Cys830/Cys839. 10 consecutive Laminin EGF-like domains span residues 298–356, 357–426, 427–471, 472–518, 519–563, 564–609, 610–655, 656–700, 701–755, and 756–808; these read CVCN…TCEA, CNCF…PCKV, CDCD…KCKP, CECN…GCVE, CVCD…DCKF, CNCD…NCKA, CACD…DCRG, CECL…ICEE, CNCN…GCRS, and CDCN…GCES. Asn351 carries N-linked (GlcNAc...) asparagine glycosylation. Asn477 carries an N-linked (GlcNAc...) asparagine glycan. N-linked (GlcNAc...) asparagine glycans are attached at residues Asn511 and Asn530. N-linked (GlcNAc...) asparagine glycosylation occurs at Asn634. N-linked (GlcNAc...) asparagine glycosylation occurs at Asn761. One can recognise a Laminin EGF-like 11; truncated domain in the interval 809–839; that stretch reads CHCDIGGALRAECDITSGQCKCRPRVTGLRC. Asn1014 and Asn1341 each carry an N-linked (GlcNAc...) asparagine glycan. 16 cysteine pairs are disulfide-bonded: Cys1415–Cys1427, Cys1417–Cys1434, Cys1436–Cys1445, Cys1448–Cys1458, Cys1461–Cys1469, Cys1463–Cys1476, Cys1478–Cys1487, Cys1490–Cys1503, Cys1506–Cys1520, Cys1508–Cys1527, Cys1529–Cys1538, Cys1541–Cys1551, Cys1554–Cys1566, Cys1556–Cys1573, Cys1575–Cys1584, and Cys1587–Cys1602. Laminin EGF-like domains lie at 1415–1460, 1461–1505, 1506–1553, and 1554–1604; these read CDCV…ECIK, CQCN…GCQK, CGCH…HCYG, and CSCN…GCVN. In terms of domain architecture, Laminin EGF-like 16; first part spans 1605–1614; sequence CFCFGVTDSC. The region spanning 1615 to 1796 is the Laminin IV type A domain; sequence RSSMYPVTIM…SVIKASSVEQ (182 aa). 2 N-linked (GlcNAc...) asparagine glycosylation sites follow: Asn1705 and Asn1756. Positions 1797 to 1829 constitute a Laminin EGF-like 16; second part domain; the sequence is CQCPAPYTGPSCQLCASGYHRVQSGSFLGACVP. 24 cysteine pairs are disulfide-bonded: Cys1830-Cys1839, Cys1832-Cys1846, Cys1849-Cys1858, Cys1861-Cys1877, Cys1880-Cys1894, Cys1882-Cys1905, Cys1907-Cys1916, Cys1919-Cys1934, Cys1937-Cys1951, Cys1939-Cys1958, Cys1961-Cys1970, Cys1973-Cys1987, Cys1990-Cys2000, Cys1992-Cys2007, Cys2009-Cys2018, Cys2021-Cys2031, Cys2037-Cys2048, Cys2039-Cys2055, Cys2057-Cys2066, Cys2069-Cys2081, Cys2084-Cys2096, Cys2086-Cys2103, Cys2105-Cys2114, and Cys2117-Cys2129. Laminin EGF-like domains follow at residues 1830–1879, 1880–1936, 1937–1989, 1990–2036, 2037–2083, and 2084–2131; these read CECN…DCMA, CACP…SCSP, CQCN…NCSS, CECS…GCQG, CHCG…GCDK, and CDCE…GCRR. An N-linked (GlcNAc...) asparagine glycan is attached at Asn1868. N-linked (GlcNAc...) asparagine glycosylation occurs at Asn1944. Asn1986 carries N-linked (GlcNAc...) asparagine glycosylation. N-linked (GlcNAc...) asparagine glycosylation is present at Asn2002. N-linked (GlcNAc...) asparagine glycans are attached at residues Asn2159, Asn2207, Asn2231, Asn2235, Asn2401, Asn2421, Asn2487, and Asn2821. 3 Laminin G-like domains span residues 2693–2884, 2896–3066, and 3072–3235; these read GAHF…VNGA, ELVV…RSGC, and RTVS…LNGC. An intrachain disulfide couples Cys3040 to Cys3066. The N-linked (GlcNAc...) asparagine glycan is linked to Asn3087. A disulfide bond links Cys3209 and Cys3235. Residues 3236–3294 form a disordered region; the sequence is SLSDDENISTTTTAAPKPTDDSDVAVLPIDEEEESTTTTTTTTTEEPTEEPAEARPDGH. Asn3242 carries N-linked (GlcNAc...) asparagine glycosylation. A compositionally biased stretch (low complexity) spans 3271–3280; the sequence is TTTTTTTTTE. Laminin G-like domains follow at residues 3310–3482 and 3488–3669; these read GFNF…TEQC and PGMY…RNAC. Cys3460 and Cys3482 are disulfide-bonded. Asn3541 carries an N-linked (GlcNAc...) asparagine glycan. Cys3633 and Cys3669 form a disulfide bridge.

Laminin is a complex glycoprotein, consisting of three different polypeptide chains (alpha, beta, gamma), which are bound to each other by disulfide bonds into a cross-shaped molecule comprising one long and three short arms with globules at each end.

Its subcellular location is the secreted. The protein resides in the extracellular space. The protein localises to the extracellular matrix. It is found in the basement membrane. Functionally, binding to cells via a high affinity receptor, laminin is thought to mediate the attachment, migration and organization of cells into tissues during embryonic development by interacting with other extracellular matrix components. Required to assemble a stable basement membrane and for organizing receptor complexes and cytoskeletal components to the proper cell surfaces. During embryogenesis, does not require the presence of collagen type IV in order to associate with cell surfaces, prior to assembly of the prototypical basement membrane. During the formation of neuromuscular junctions at the larval stage, negatively regulates membrane protrusion from body wall muscles, probably downstream of the integrin complex formed by pat-2 and pat-3. Probably plays a distinct role from the related laminin subunit alpha lam-3. This is Laminin-like protein epi-1 (epi-1) from Caenorhabditis elegans.